Consider the following 488-residue polypeptide: Ribulose bisphosphate carboxylase large chain (488 aa).

Substrate is bound by residues N127 and T177. Catalysis depends on K179, which acts as the Proton acceptor. A substrate-binding site is contributed by K181. Mg(2+) is bound by residues K205, D207, and E208. An N6-carboxylysine modification is found at K205. H297 acts as the Proton acceptor in catalysis. R298, H330, and S382 together coordinate substrate.

The protein belongs to the RuBisCO large chain family. Type I subfamily. As to quaternary structure, heterohexadecamer of 8 large chains and 8 small chains. Requires Mg(2+) as cofactor.

The protein resides in the plastid. It localises to the chloroplast. It catalyses the reaction 2 (2R)-3-phosphoglycerate + 2 H(+) = D-ribulose 1,5-bisphosphate + CO2 + H2O. The enzyme catalyses D-ribulose 1,5-bisphosphate + O2 = 2-phosphoglycolate + (2R)-3-phosphoglycerate + 2 H(+). In terms of biological role, ruBisCO catalyzes two reactions: the carboxylation of D-ribulose 1,5-bisphosphate, the primary event in carbon dioxide fixation, as well as the oxidative fragmentation of the pentose substrate in the photorespiration process. Both reactions occur simultaneously and in competition at the same active site. The protein is Ribulose bisphosphate carboxylase large chain of Cyanidium caldarium (Red alga).